Reading from the N-terminus, the 65-residue chain is Dybowskin-2CDYa (65 aa).

The signal sequence occupies residues 1–22 (MFTLKKSLLLLFFIGVIKLSLC). Residues 23 to 47 (EEERNADDDERRDDPDEMDVEVENR) constitute a propeptide that is removed on maturation. Residues 26 to 43 (RNADDDERRDDPDEMDVE) show a composition bias toward acidic residues. Positions 26-65 (RNADDDERRDDPDEMDVEVENRSAVGRHGRRFGLRKHRKH) are disordered. Residues 50–65 (VGRHGRRFGLRKHRKH) show a composition bias toward basic residues.

This sequence belongs to the frog skin active peptide (FSAP) family. Brevinin subfamily. Expressed by the skin glands.

It localises to the secreted. Antimicrobial peptide. Has activity against the Gram-positive bacterium S.aureus (MIC=6 uM) and the Gram-negative bacterium E.coli (MIC=3 uM). Lacks hemolytic activity against human erythrocytes. In Rana dybowskii (Dybovsky's frog), this protein is Dybowskin-2CDYa.